A 499-amino-acid polypeptide reads, in one-letter code: Cytochrome P450 71A27 (499 aa).

The chain crosses the membrane as a helical span at residues 3–23; it reads MILISLCLTTLLAFLFLKPLL. Cysteine 438 serves as a coordination point for heme.

This sequence belongs to the cytochrome P450 family. It depends on heme as a cofactor.

The protein resides in the membrane. The sequence is that of Cytochrome P450 71A27 (CYP71A27) from Arabidopsis thaliana (Mouse-ear cress).